The chain runs to 563 residues: Protein disulfide isomerase-like 1-4 (563 aa).

A signal peptide spans 1–22 (MRSRSLLLVALATLLLHASASA). Positions 40-64 (NDPDGWLQEGSPDDDDDDDLFHHGQ) are disordered. The Thioredoxin 1 domain maps to 46 to 180 (LQEGSPDDDD…IVSWVNKKLA (135 aa)). N-linked (GlcNAc...) asparagine glycosylation is present at asparagine 82. Residues cysteine 102 and cysteine 105 each act as nucleophile in the active site. Cysteines 102 and 105 form a disulfide. 2 N-linked (GlcNAc...) asparagine glycosylation sites follow: asparagine 185 and asparagine 315. The Thioredoxin 2 domain occupies 394–523 (FLEEKLTPFY…MYKFIKKHAS (130 aa)). Active-site nucleophile residues include cysteine 444 and cysteine 447. An intrachain disulfide couples cysteine 444 to cysteine 447. Residues 529–542 (KRPDSSATKTEKDQ) are compositionally biased toward basic and acidic residues. Positions 529–563 (KRPDSSATKTEKDQSTASTNLRGERSSGTNFKDEL) are disordered. Polar residues predominate over residues 543–563 (STASTNLRGERSSGTNFKDEL). The short motif at 560 to 563 (KDEL) is the Prevents secretion from ER element.

This sequence belongs to the protein disulfide isomerase family.

It is found in the endoplasmic reticulum lumen. It carries out the reaction Catalyzes the rearrangement of -S-S- bonds in proteins.. In terms of biological role, acts as a protein-folding catalyst that interacts with nascent polypeptides to catalyze the formation, isomerization, and reduction or oxidation of disulfide bonds. May play a role in storage protein biogenesis. This chain is Protein disulfide isomerase-like 1-4 (PDIL1-4), found in Oryza sativa subsp. japonica (Rice).